The sequence spans 916 residues: Isoleucine--tRNA ligase (916 aa).

A 'HIGH' region motif is present at residues 57–67; the sequence is PYANGNLHMGH. An L-isoleucyl-5'-AMP-binding site is contributed by E554. A 'KMSKS' region motif is present at residues 595–599; that stretch reads KMSKS. K598 is an ATP binding site. C885, C888, C905, and C908 together coordinate Zn(2+).

The protein belongs to the class-I aminoacyl-tRNA synthetase family. IleS type 1 subfamily. As to quaternary structure, monomer. Zn(2+) serves as cofactor.

The protein localises to the cytoplasm. The catalysed reaction is tRNA(Ile) + L-isoleucine + ATP = L-isoleucyl-tRNA(Ile) + AMP + diphosphate. Its function is as follows. Catalyzes the attachment of isoleucine to tRNA(Ile). As IleRS can inadvertently accommodate and process structurally similar amino acids such as valine, to avoid such errors it has two additional distinct tRNA(Ile)-dependent editing activities. One activity is designated as 'pretransfer' editing and involves the hydrolysis of activated Val-AMP. The other activity is designated 'posttransfer' editing and involves deacylation of mischarged Val-tRNA(Ile). The protein is Isoleucine--tRNA ligase of Staphylococcus haemolyticus (strain JCSC1435).